A 291-amino-acid chain; its full sequence is Acetyl-coenzyme A carboxylase carboxyl transferase subunit beta (291 aa).

One can recognise a CoA carboxyltransferase N-terminal domain in the interval Val-23–Ser-291.

It belongs to the AccD/PCCB family. In terms of assembly, acetyl-CoA carboxylase is a heterohexamer composed of biotin carboxyl carrier protein (AccB), biotin carboxylase (AccC) and two subunits each of ACCase subunit alpha (AccA) and ACCase subunit beta (AccD).

It localises to the cytoplasm. The catalysed reaction is N(6)-carboxybiotinyl-L-lysyl-[protein] + acetyl-CoA = N(6)-biotinyl-L-lysyl-[protein] + malonyl-CoA. It functions in the pathway lipid metabolism; malonyl-CoA biosynthesis; malonyl-CoA from acetyl-CoA: step 1/1. In terms of biological role, component of the acetyl coenzyme A carboxylase (ACC) complex. Biotin carboxylase (BC) catalyzes the carboxylation of biotin on its carrier protein (BCCP) and then the CO(2) group is transferred by the transcarboxylase to acetyl-CoA to form malonyl-CoA. This Opitutus terrae (strain DSM 11246 / JCM 15787 / PB90-1) protein is Acetyl-coenzyme A carboxylase carboxyl transferase subunit beta.